Here is a 378-residue protein sequence, read N- to C-terminus: Homeobox protein Meis3 (378 aa).

The tract at residues 24-57 (FSEAAPSVPRAPGPYTPHRPPQLQAPGLDSDSLK) is disordered. The segment covering 32–43 (PRAPGPYTPHRP) has biased composition (pro residues). In terms of domain architecture, MEIS N-terminal spans 99–182 (GGDVCSSDSF…PIDLVIEDRD (84 aa)). Residues 203–265 (NTTWIRDHED…DEDLDLERRR (63 aa)) are disordered. Over residues 230–244 (SQSGDNSSDQGDGLD) the composition is skewed to low complexity. The homeobox; TALE-type DNA-binding region spans 265 to 327 (RNKKRGIFPK…NARRRIVQPM (63 aa)).

The protein belongs to the TALE/MEIS homeobox family. As to expression, expressed at high levels in the brain. Significant expression also observed in the heart, spleen and lung. Expressed in pancreatic islets (beta-cells and non-beta-cells).

The protein resides in the nucleus. Functionally, transcriptional regulator which directly modulates PDPK1 expression, thus promoting survival of pancreatic beta-cells. Also regulates expression of NDFIP1, BNIP3, and CCNG1. In Mus musculus (Mouse), this protein is Homeobox protein Meis3 (Meis3).